A 336-amino-acid chain; its full sequence is Methionyl-tRNA formyltransferase (336 aa).

Position 110 to 113 (Ser110 to Pro113) interacts with (6S)-5,6,7,8-tetrahydrofolate.

The protein belongs to the Fmt family.

It carries out the reaction L-methionyl-tRNA(fMet) + (6R)-10-formyltetrahydrofolate = N-formyl-L-methionyl-tRNA(fMet) + (6S)-5,6,7,8-tetrahydrofolate + H(+). Functionally, attaches a formyl group to the free amino group of methionyl-tRNA(fMet). The formyl group appears to play a dual role in the initiator identity of N-formylmethionyl-tRNA by promoting its recognition by IF2 and preventing the misappropriation of this tRNA by the elongation apparatus. This chain is Methionyl-tRNA formyltransferase, found in Prochlorococcus marinus (strain NATL2A).